Consider the following 239-residue polypeptide: Small ribosomal subunit protein uS2 (239 aa).

This sequence belongs to the universal ribosomal protein uS2 family.

In Parasynechococcus marenigrum (strain WH8102), this protein is Small ribosomal subunit protein uS2.